The sequence spans 293 residues: Protease HtpX (293 aa).

Transmembrane regions (helical) follow at residues 4-24 (ISLF…VLSL) and 33-53 (AGLM…SLLM). A Zn(2+)-binding site is contributed by H139. E140 is an active-site residue. H143 contributes to the Zn(2+) binding site. The next 2 helical transmembrane spans lie at 158–178 (VVNT…AGFM) and 193–213 (LVYF…ASII). E222 lines the Zn(2+) pocket.

The protein belongs to the peptidase M48B family. Requires Zn(2+) as cofactor.

Its subcellular location is the cell inner membrane. This chain is Protease HtpX, found in Sodalis glossinidius (strain morsitans).